Reading from the N-terminus, the 260-residue chain is MVSLDDILGIVYVTSWSISMYPPIITNWRHKSASAISMDFVMLNTAGYSYLVISIFLQLYCWKMTGDESDLGRPKLTQFDFWYCLHGCLMNVVLLTQVVAGARIWRFPGKGHRKMNPWYLRILLASLAIFSLLTVQFMYSNYWYDWHNSRTLAYCNNLFLLKISMSLIKYIPQVTHNSTRKSMDCFPIQGVFLDVTGGIASLLQLIWQLSNDQGFSLDTFVTNFGKVGLSMVTLIFNFIFIMQWFVYRSRGHDLASEYPL.

The PQ-loop 1 domain maps to 1–67 (MVSLDDILGI…QLYCWKMTGD (67 aa)). Helical transmembrane passes span 7 to 28 (ILGI…ITNW), 40 to 62 (FVML…LYCW), 81 to 102 (FWYC…VAGA), 118 to 138 (WYLR…VQFM), and 151 to 175 (TLAY…PQVT). The 51-residue stretch at 162–212 (KISMSLIKYIPQVTHNSTRKSMDCFPIQGVFLDVTGGIASLLQLIWQLSND) folds into the PQ-loop 2 domain. N-linked (GlcNAc...) asparagine glycosylation is present at asparagine 177. 2 helical membrane passes run 185 to 205 (CFPI…LLQL) and 227 to 247 (VGLS…WFVY).

It belongs to the cystinosin family.

The protein resides in the endosome membrane. Its subcellular location is the vacuole membrane. The catalysed reaction is L-cystine(out) + H(+)(out) = L-cystine(in) + H(+)(in). Cystine/H(+) symporter that mediates export of cystine, the oxidized dimer of cysteine, from vacuoles/endodomes. This Saccharomyces cerevisiae (strain ATCC 204508 / S288c) (Baker's yeast) protein is Cystine transporter (ERS1).